The primary structure comprises 137 residues: MKPPSAQSSPAAVAAAAPAMDSAAAADLTDVLCEFDAVLADFASPFHERHFHYEEHLERMKRRSSASVSDSSGFSDSESADSVYRDSFTFSDEKLNSPTNSSPALLPSAVTPRKAKLGDTKELEDFIADLDRTLASM.

Residues 57-116 (LERMKRRSSASVSDSSGFSDSESADSVYRDSFTFSDEKLNSPTNSSPALLPSAVTPRKAK) form a disordered region. Residues 65–82 (SASVSDSSGFSDSESADS) show a composition bias toward low complexity. A phosphoserine mark is found at Ser67, Ser69, Ser71, Ser75, Ser91, and Ser97. A Phosphothreonine modification is found at Thr111.

As to quaternary structure, interacts with CDK1 and PLK1. Interacts with SMAD3.

The protein resides in the cytoplasm. Its subcellular location is the nucleus. The protein localises to the cytoskeleton. It localises to the microtubule organizing center. It is found in the centrosome. Its function is as follows. Modulates the activity of cell cycle-specific kinases. Enhances CDK1 activity. May contribute to the regulation of the cell cycle. May inhibit growth of glioma cells by promoting arrest of mitotic progression at the G2/M transition. Fibrogenic factor contributing to the pathogenesis of renal fibrosis through fibroblast activation. In Mus musculus (Mouse), this protein is Regulator of cell cycle RGCC (Rgcc).